Reading from the N-terminus, the 901-residue chain is HTH-type transcriptional regulator MalT (901 aa).

ATP is bound at residue 39 to 46 (SPAGYGKT). The HTH luxR-type domain occupies 829-894 (ELIRTSPLTQ…DAVQHAQQLL (66 aa)). Positions 853-872 (NEQIAGELDVAATTIKTHIR) form a DNA-binding region, H-T-H motif.

This sequence belongs to the MalT family. As to quaternary structure, monomer in solution. Oligomerizes to an active state in the presence of the positive effectors ATP and maltotriose.

Activated by ATP and maltotriose, which are both required for DNA binding. Its function is as follows. Positively regulates the transcription of the maltose regulon whose gene products are responsible for uptake and catabolism of malto-oligosaccharides. Specifically binds to the promoter region of its target genes, recognizing a short DNA motif called the MalT box. This Klebsiella pneumoniae (strain 342) protein is HTH-type transcriptional regulator MalT.